A 1115-amino-acid chain; its full sequence is DNA-directed RNA polymerase subunit beta (1115 aa).

Residues 1084–1115 (HEAGEGEDDEYFEEDEEAVDDEPMTFDDDDME) are disordered. Over residues 1088-1115 (EGEDDEYFEEDEEAVDDEPMTFDDDDME) the composition is skewed to acidic residues.

Belongs to the RNA polymerase beta chain family. The RNAP catalytic core consists of 2 alpha, 1 beta, 1 beta' and 1 omega subunit. When a sigma factor is associated with the core the holoenzyme is formed, which can initiate transcription.

It catalyses the reaction RNA(n) + a ribonucleoside 5'-triphosphate = RNA(n+1) + diphosphate. Functionally, DNA-dependent RNA polymerase catalyzes the transcription of DNA into RNA using the four ribonucleoside triphosphates as substrates. This chain is DNA-directed RNA polymerase subunit beta, found in Desulfitobacterium hafniense (strain Y51).